The primary structure comprises 281 residues: Dexamethasone-induced Ras-related protein 1 (281 aa).

At Cys11 the chain carries S-nitrosocysteine. GTP is bound at residue 31–38 (GSSKVGKT). The Effector region motif lies at 53 to 61 (YTPTIEDFH). Residues 78-82 (DTSGN) and 145-148 (NKGD) each bind GTP. Cys278 is modified (cysteine methyl ester). A lipid anchor (S-farnesyl cysteine) is attached at Cys278. Residues 279–281 (VIS) constitute a propeptide, removed in mature form.

It belongs to the small GTPase superfamily. RasD family. Forms a ternary complex with CAPON and NOS1. Component of a complex, at least composed of APBB1, RASD1/DEXRAS1 and APP. Interacts with APBB1/FE65. S-nitrosylation stimulates guanine-nucleotide exchange activity. As to expression, expressed in a variety of tissues including heart, cardiovascular tissues, brain, placenta, lung, liver, skeletal muscle, kidney, pancreas, gastrointestinal and reproductive tissues.

It localises to the cell membrane. Its subcellular location is the cytoplasm. It is found in the perinuclear region. The protein localises to the nucleus. Its function is as follows. Small GTPase. Negatively regulates the transcription regulation activity of the APBB1/FE65-APP complex via its interaction with APBB1/FE65. This Homo sapiens (Human) protein is Dexamethasone-induced Ras-related protein 1 (RASD1).